Here is a 190-residue protein sequence, read N- to C-terminus: Glutathione peroxidase 2 (190 aa).

Sec40 is an active-site residue. Residue Sec40 is a non-standard amino acid, selenocysteine.

Belongs to the glutathione peroxidase family. In terms of assembly, homotetramer.

It is found in the cytoplasm. It localises to the cytosol. The enzyme catalyses 2 glutathione + H2O2 = glutathione disulfide + 2 H2O. The catalysed reaction is a hydroperoxy polyunsaturated fatty acid + 2 glutathione = a hydroxy polyunsaturated fatty acid + glutathione disulfide + H2O. It catalyses the reaction tert-butyl hydroperoxide + 2 glutathione = tert-butanol + glutathione disulfide + H2O. It carries out the reaction cumene hydroperoxide + 2 glutathione = 2-phenylpropan-2-ol + glutathione disulfide + H2O. The enzyme catalyses (13S)-hydroperoxy-(9Z,11E)-octadecadienoate + 2 glutathione = (13S)-hydroxy-(9Z,11E)-octadecadienoate + glutathione disulfide + H2O. The catalysed reaction is (5S)-hydroperoxy-(6E,8Z,11Z,14Z)-eicosatetraenoate + 2 glutathione = (5S)-hydroxy-(6E,8Z,11Z,14Z)-eicosatetraenoate + glutathione disulfide + H2O. It catalyses the reaction (12R)-hydroperoxy-(5Z,8Z,10E,14Z)-eicosatetraenoate + 2 glutathione = (12R)-hydroxy-(5Z,8Z,10E,14Z)-eicosatetraenoate + glutathione disulfide + H2O. It carries out the reaction (15S)-hydroperoxy-(5Z,8Z,11Z,13E)-eicosatetraenoate + 2 glutathione = (15S)-hydroxy-(5Z,8Z,11Z,13E)-eicosatetraenoate + glutathione disulfide + H2O. Functionally, catalyzes the reduction of hydroperoxides in a glutathione-dependent manner thus regulating cellular redox homeostasis. Can reduce small soluble hydroperoxides such as H2O2, cumene hydroperoxide and tert-butyl hydroperoxide, as well as several fatty acid-derived hydroperoxides. Cannot reduce phosphatidycholine hydroperoxide. This is Glutathione peroxidase 2 (GPX2) from Sapajus apella (Brown-capped capuchin).